We begin with the raw amino-acid sequence, 159 residues long: Small ribosomal subunit protein uS17y (159 aa).

It belongs to the universal ribosomal protein uS17 family.

It is found in the cytoplasm. This chain is Small ribosomal subunit protein uS17y (RPS11B), found in Arabidopsis thaliana (Mouse-ear cress).